A 634-amino-acid polypeptide reads, in one-letter code: Knob-associated histidine-rich protein (634 aa).

The first 34 residues, 1–34, serve as a signal peptide directing secretion; that stretch reads MKSFKNKNTLRRKKAFPVFTKILLVSFLVWVLKC. N-linked (GlcNAc...) asparagine glycosylation occurs at asparagine 42. The segment covering 57–87 has biased composition (basic residues); the sequence is AQKQHEHHHHHHHQHQHQHQAPHQAHHHHHH. Disordered regions lie at residues 57–143 and 347–634; these read AQKQ…QVFR and SSVN…GCCG. The segment covering 95–104 has biased composition (low complexity); sequence PQVHQQVHGQ. Basic residues predominate over residues 108–117; that stretch reads HHHHHHHHHQ. Basic and acidic residues-rich tracts occupy residues 354–375 and 396–405; these read KHGD…EGEK and KDNEDAESVK. Residues 406–422 show a composition bias toward basic residues; the sequence is SKKHKSHDCEKKKSKKH. Composition is skewed to basic and acidic residues over residues 423–444 and 453–493; these read KDNE…GEKH and KTNE…KKVD. Residues 494–505 are compositionally biased toward polar residues; the sequence is STSADNKSTNAA. Basic and acidic residues predominate over residues 509-520; the sequence is AKDKTQGGKTDK. A run of 4 repeats spans residues 540–549, 550–559, 560–569, and 570–579. The 4 X 10 AA tandem repeats of [TS]-[KE]-[GE]-A-T-K-[EG]-A-S-T stretch occupies residues 540-580; it reads TKGATKEASTSKEATKEASTSKGATKEASTTEGATKGASTT. Positions 567–591 are enriched in low complexity; it reads ASTTEGATKGASTTAGSTTGATTGA. Over residues 605 to 620 the composition is skewed to polar residues; sequence AANNGEQVMSRGQAQL. The span at 625 to 634 shows a compositional bias: basic residues; the sequence is KKKKKRGCCG.

The protein localises to the secreted. Functionally, KAHRP might mimick human histidine-rich glycoproteins to anchor host thrombospondin or a parasite analog in a binding complex with the endothelial cell receptor. This chain is Knob-associated histidine-rich protein, found in Plasmodium falciparum (isolate FCR-3 / Gambia).